A 306-amino-acid chain; its full sequence is Glutaminase (306 aa).

Substrate-binding residues include serine 64, asparagine 115, glutamate 159, asparagine 166, tyrosine 190, tyrosine 242, and valine 260.

This sequence belongs to the glutaminase family. In terms of assembly, homotetramer.

It carries out the reaction L-glutamine + H2O = L-glutamate + NH4(+). This is Glutaminase from Aliivibrio fischeri (strain ATCC 700601 / ES114) (Vibrio fischeri).